Reading from the N-terminus, the 104-residue chain is Putative pterin-4-alpha-carbinolamine dehydratase (104 aa).

Belongs to the pterin-4-alpha-carbinolamine dehydratase family.

The catalysed reaction is (4aS,6R)-4a-hydroxy-L-erythro-5,6,7,8-tetrahydrobiopterin = (6R)-L-erythro-6,7-dihydrobiopterin + H2O. The polypeptide is Putative pterin-4-alpha-carbinolamine dehydratase (pcbD) (Rhizobium meliloti (strain 1021) (Ensifer meliloti)).